The primary structure comprises 205 residues: Small ribosomal subunit protein uS4c (205 aa).

Residues 22–42 (TSKISKKTNTPGEHGQPQNKL) are disordered. Residues 28 to 42 (KTNTPGEHGQPQNKL) show a composition bias toward polar residues. The 64-residue stretch at 94 to 157 (MRLDNIVYRL…ASRDLVKKFV (64 aa)) folds into the S4 RNA-binding domain.

The protein belongs to the universal ribosomal protein uS4 family. As to quaternary structure, part of the 30S ribosomal subunit. Contacts protein S5. The interaction surface between S4 and S5 is involved in control of translational fidelity.

Its subcellular location is the plastid. It localises to the chloroplast. Its function is as follows. One of the primary rRNA binding proteins, it binds directly to 16S rRNA where it nucleates assembly of the body of the 30S subunit. With S5 and S12 plays an important role in translational accuracy. The sequence is that of Small ribosomal subunit protein uS4c (rps4) from Tupiella akineta (Green alga).